A 209-amino-acid chain; its full sequence is NADH-quinone oxidoreductase subunit C (209 aa).

Belongs to the complex I 30 kDa subunit family. NDH-1 is composed of 14 different subunits. Subunits NuoB, C, D, E, F, and G constitute the peripheral sector of the complex.

The protein localises to the cell inner membrane. The enzyme catalyses a quinone + NADH + 5 H(+)(in) = a quinol + NAD(+) + 4 H(+)(out). In terms of biological role, NDH-1 shuttles electrons from NADH, via FMN and iron-sulfur (Fe-S) centers, to quinones in the respiratory chain. The immediate electron acceptor for the enzyme in this species is believed to be ubiquinone. Couples the redox reaction to proton translocation (for every two electrons transferred, four hydrogen ions are translocated across the cytoplasmic membrane), and thus conserves the redox energy in a proton gradient. The sequence is that of NADH-quinone oxidoreductase subunit C from Bordetella petrii (strain ATCC BAA-461 / DSM 12804 / CCUG 43448).